A 172-amino-acid chain; its full sequence is Large ribosomal subunit protein bL17 (172 aa).

Residues 153–172 (AQAAEPVAAAEPATPATTAG) are disordered.

It belongs to the bacterial ribosomal protein bL17 family. Part of the 50S ribosomal subunit. Contacts protein L32.

The polypeptide is Large ribosomal subunit protein bL17 (Sorangium cellulosum (strain So ce56) (Polyangium cellulosum (strain So ce56))).